Consider the following 250-residue polypeptide: tRNA (guanine-N(1)-)-methyltransferase (250 aa).

Residues glycine 116 and 136–141 (IGDYVL) contribute to the S-adenosyl-L-methionine site.

Belongs to the RNA methyltransferase TrmD family. As to quaternary structure, homodimer.

Its subcellular location is the cytoplasm. The enzyme catalyses guanosine(37) in tRNA + S-adenosyl-L-methionine = N(1)-methylguanosine(37) in tRNA + S-adenosyl-L-homocysteine + H(+). Its function is as follows. Specifically methylates guanosine-37 in various tRNAs. The protein is tRNA (guanine-N(1)-)-methyltransferase of Pseudomonas putida (strain W619).